Reading from the N-terminus, the 1347-residue chain is Protein dispatched homolog 3 (1347 aa).

Residues 1 to 67 (MDSEDDPLLQ…LGWAFTNPCC (67 aa)) are Cytoplasmic-facing. The chain crosses the membrane as a helical span at residues 68 to 88 (AGLVLFLGCSIPMVLSAFMFL). Residues 89-417 (YYPPLDIDIS…YEVRRTFNND (329 aa)) are Lumenal-facing. Residues 156-207 (GNHSRPASRAPRSAPRDTVATQTSAANSSERRRREAPSPEGQVTNQSRARRG) form a disordered region. A glycan (N-linked (GlcNAc...) asparagine) is linked at asparagine 157. The span at 159–168 (SRPASRAPRS) shows a compositional bias: low complexity. Residues 412–570 (RTFNNDMLLA…LFTMPAALGL (159 aa)) form the SSD domain. The chain crosses the membrane as a helical span at residues 418 to 438 (MLLAFISSSCIAALVYILTSC). A topological domain (cytoplasmic) is located at residue serine 439. The helical transmembrane segment at 440-460 (VFLSFFGIASIGLSCLVALFL) threads the bilayer. At 461–463 (YHV) the chain is on the lumenal side. A helical membrane pass occupies residues 464–484 (VFGIQYLGILNGVAAFVIVGI). At 485–528 (GVDDVFVFINTYRQATHLEDPQLRMIHTIQTAGKATFFTSLTTA) the chain is on the cytoplasmic side. The chain crosses the membrane as a helical span at residues 529–549 (AAYAANVFSQIPAVHDFGLFM). Position 550 (serine 550) is a topological domain, lumenal. Residues 551–571 (LIVTCCWLAVLFTMPAALGLW) form a helical membrane-spanning segment. Residues 572–684 (SLYMAPLESS…WVLWAAVKSR (113 aa)) are Cytoplasmic-facing. Residues 685–705 (WVIVGLFASILILSLVFASRL) traverse the membrane as a helical segment. Topologically, residues 706-1137 (RPASRAPLLF…IFMEIIGVQS (432 aa)) are lumenal. Asparagine 976 carries N-linked (GlcNAc...) asparagine glycosylation. The chain crosses the membrane as a helical span at residues 1138-1158 (ALYGLVLSLLICVAAVAVFTT). A topological domain (cytoplasmic) is located at residue histidine 1159. The chain crosses the membrane as a helical span at residues 1160 to 1180 (VLLLLPVLLSILGIVCLVVTI). Topologically, residues 1181 to 1246 (MYWSGWEMGA…TLEAVRHVGV (66 aa)) are lumenal. Residues 1247–1267 (AIVSSALTTVIATVPLFFCII) form a helical membrane-spanning segment. Residues 1268–1281 (APFAKFGKIVALNT) are Cytoplasmic-facing. The helical transmembrane segment at 1282–1302 (GVSILYTLTVSTALLGIMAPG) threads the bilayer. Topologically, residues 1303–1310 (SFTRTRTS) are lumenal. Residues 1311–1331 (FLKALGAVLLAGALGLGACLV) traverse the membrane as a helical segment. Topologically, residues 1332 to 1347 (LLRSGYKIPLPSGATL) are cytoplasmic.

The protein belongs to the patched family. Expressed in brain, retina, testis and thymus.

It localises to the endoplasmic reticulum membrane. The protein localises to the nucleus membrane. It is found in the cytoplasmic vesicle membrane. In terms of biological role, plays a role in neuronal proliferation and differentiation. Plays a role in the accumulation of cellular cholesterol. Involved in intracellular lipid droplet formation. May contribute to cholesterol homeostasis in neuronal cells. This is Protein dispatched homolog 3 from Mus musculus (Mouse).